Consider the following 184-residue polypeptide: dITP/XTP pyrophosphatase (184 aa).

8–13 provides a ligand contact to substrate; sequence TGNKGK. E37 and D66 together coordinate Mg(2+). Catalysis depends on D66, which acts as the Proton acceptor. Residues S67, 142–145, K163, and 168–169 contribute to the substrate site; these read FGYD and HR.

It belongs to the HAM1 NTPase family. As to quaternary structure, homodimer. The cofactor is Mg(2+).

The catalysed reaction is XTP + H2O = XMP + diphosphate + H(+). The enzyme catalyses dITP + H2O = dIMP + diphosphate + H(+). It catalyses the reaction ITP + H2O = IMP + diphosphate + H(+). Its function is as follows. Pyrophosphatase that catalyzes the hydrolysis of nucleoside triphosphates to their monophosphate derivatives, with a high preference for the non-canonical purine nucleotides XTP (xanthosine triphosphate), dITP (deoxyinosine triphosphate) and ITP. Seems to function as a house-cleaning enzyme that removes non-canonical purine nucleotides from the nucleotide pool, thus preventing their incorporation into DNA/RNA and avoiding chromosomal lesions. The sequence is that of dITP/XTP pyrophosphatase from Methanosarcina acetivorans (strain ATCC 35395 / DSM 2834 / JCM 12185 / C2A).